The primary structure comprises 110 residues: Nucleoid-associated protein Sfri_2406 (110 aa).

This sequence belongs to the YbaB/EbfC family. In terms of assembly, homodimer.

The protein resides in the cytoplasm. Its subcellular location is the nucleoid. In terms of biological role, binds to DNA and alters its conformation. May be involved in regulation of gene expression, nucleoid organization and DNA protection. The chain is Nucleoid-associated protein Sfri_2406 from Shewanella frigidimarina (strain NCIMB 400).